A 439-amino-acid polypeptide reads, in one-letter code: L-tryptophan decarboxylase (439 aa).

The protein belongs to the phosphatidylserine decarboxylase family.

It carries out the reaction L-tryptophan + H(+) = tryptamine + CO2. It participates in secondary metabolite biosynthesis. L-tryptophan decarboxylase; part of the gene cluster that mediates the biosynthesis of psilocybin, a psychotropic tryptamine-derived natural product. The first step in the pathway is the decarboxylation of L-tryptophan to tryptamine by the decarboxylase psiD. PsiD does not decarboxylate phenylalanine, tyrosine, or 5-hydroxy- L -tryptophan (5-HTP). 4-hydroxy-L-tryptophan is accepted as substrate by psiD as well. The cytochrome P450 monooxygenase psiH then converts tryptamine to 4-hydroxytryptamine. The kinase psiK catalyzes the 4-O-phosphorylation step by converting 4-hydroxytryptamine into norbaeocystin. The methyltransferase psiM then catalyzes iterative methyl transfer to the amino group of norbaeocystin to yield psilocybin via a monomethylated intermediate, baeocystin. 4-hydroxy-6-methyl-l-tryptophancan also be converted the decarboxylase PsiD, kinase PsiK, and methyltransferase PsiM into respectively 6-methyl-norbaeocystin, 6-methylbaeocystin, and 6-methylpsilocybin. This is L-tryptophan decarboxylase from Psilocybe cyanescens.